Consider the following 310-residue polypeptide: Probable RuBisCO transcriptional regulator (310 aa).

Positions 6 to 63 constitute an HTH lysR-type domain; sequence FTLDQLRILKAIASEGSFKKAAESLYISQPAVSLQIQNLEKQLNIPIFDRANRKAVFT. Positions 23–42 form a DNA-binding region, H-T-H motif; it reads FKKAAESLYISQPAVSLQIQ.

The protein belongs to the LysR transcriptional regulatory family.

It is found in the plastid. It localises to the chloroplast. Its function is as follows. Trans-acting transcriptional regulator of RuBisCO genes (rbcL and rbcS) expression. In Guillardia theta (Cryptophyte), this protein is Probable RuBisCO transcriptional regulator (rbcR).